Reading from the N-terminus, the 1126-residue chain is Translation initiation factor IF-2 (1126 aa).

The segment at 63 to 519 (LSINKPSIKK…TTRQRQKRRA (457 aa)) is disordered. Residues 70 to 83 (IKKDNFKQNKEDKS) show a composition bias toward basic and acidic residues. Positions 93–111 (PLKNNSNKKPLLIKPLNKP) are enriched in low complexity. The span at 116 to 151 (KISNQLQNPNKPNIVNSSQSRANLTNTNSKPSQNFN) shows a compositional bias: polar residues. The segment covering 161 to 171 (TPPPIKSPAKP) has biased composition (pro residues). The span at 181–195 (NINNNVKSSESSQNI) shows a compositional bias: polar residues. Composition is skewed to low complexity over residues 211–224 (NTNKPKTKNFNNRK) and 240–252 (IINPNKQNNNKQN). Over residues 254–264 (AFKQTASNRPG) the composition is skewed to polar residues. Composition is skewed to low complexity over residues 291–315 (NRQGNPNRPGSPNRPGMPNRPGLRN) and 327–349 (NRQGNPNRPGSPNGPGMPNNRPG). The span at 429–443 (GKTDWDDSAKLEALR) shows a compositional bias: basic and acidic residues. The segment covering 501-517 (KQFKKKKKETTRQRQKR) has biased composition (basic residues). The tr-type G domain maps to 618 to 790 (RRPPVITVMG…ILLVSDVEDL (173 aa)). The interval 627 to 634 (GHVDHGKT) is G1. 627–634 (GHVDHGKT) provides a ligand contact to GTP. Residues 652–656 (GITQH) form a G2 region. The tract at residues 677–680 (DTPG) is G3. GTP contacts are provided by residues 677–681 (DTPGH) and 731–734 (NKID). Positions 731-734 (NKID) are G4. The segment at 767 to 769 (SAI) is G5.

It belongs to the TRAFAC class translation factor GTPase superfamily. Classic translation factor GTPase family. IF-2 subfamily.

The protein resides in the cytoplasm. Its function is as follows. One of the essential components for the initiation of protein synthesis. Protects formylmethionyl-tRNA from spontaneous hydrolysis and promotes its binding to the 30S ribosomal subunits. Also involved in the hydrolysis of GTP during the formation of the 70S ribosomal complex. In Prochlorococcus marinus (strain AS9601), this protein is Translation initiation factor IF-2.